A 469-amino-acid chain; its full sequence is 1-aminocyclopropane-1-carboxylate synthase 3 (469 aa).

Lys-272 is modified (N6-(pyridoxal phosphate)lysine). The interval 432-452 is disordered; that stretch reads APNATNHQNQQQSNANSKKKS. A compositionally biased stretch (low complexity) spans 437–447; sequence NHQNQQQSNAN.

The protein belongs to the class-I pyridoxal-phosphate-dependent aminotransferase family. Homodimer. Requires pyridoxal 5'-phosphate as cofactor.

It catalyses the reaction S-adenosyl-L-methionine = 1-aminocyclopropane-1-carboxylate + S-methyl-5'-thioadenosine + H(+). It functions in the pathway alkene biosynthesis; ethylene biosynthesis via S-adenosyl-L-methionine; ethylene from S-adenosyl-L-methionine: step 1/2. Its function is as follows. Catalyzes the formation of 1-aminocyclopropane-1-carboxylate, a direct precursor of ethylene in higher plants. The protein is 1-aminocyclopropane-1-carboxylate synthase 3 (ACS3) of Solanum lycopersicum (Tomato).